Reading from the N-terminus, the 158-residue chain is Protein BTG2 (158 aa).

A Phosphoserine; by MAPK1 and MAPK3 modification is found at Ser-147. Residue Ser-149 is modified to Phosphoserine; by MAPK14.

It belongs to the BTG family. Interacts with PRKCABP. Interacts with CNOT7 and CNOT8; indicative for an association with the CCR4-NOT complex. Interacts with PIN1, inducing mitochondrial depolarization. In terms of processing, phosphorylated at Ser-147 by MAPK1/ERK2 and MAPK3/ERK1, and at Ser-149 by MAPK14, leading to PIN1-binding and mitochondrial depolarization.

Its function is as follows. Anti-proliferative protein; the function is mediated by association with deadenylase subunits of the CCR4-NOT complex. Activates mRNA deadenylation in a CNOT6 and CNOT7-dependent manner. In vitro can inhibit deadenylase activity of CNOT7 and CNOT8. Involved in cell cycle regulation. Could be involved in the growth arrest and differentiation of the neuronal precursors. Modulates transcription regulation mediated by ESR1. Involved in mitochondrial depolarization and neurite outgrowth. The protein is Protein BTG2 (BTG2) of Homo sapiens (Human).